The primary structure comprises 217 residues: ATP-dependent Clp protease proteolytic subunit (217 aa).

S119 acts as the Nucleophile in catalysis. H144 is a catalytic residue.

The protein belongs to the peptidase S14 family. As to quaternary structure, fourteen ClpP subunits assemble into 2 heptameric rings which stack back to back to give a disk-like structure with a central cavity, resembling the structure of eukaryotic proteasomes.

It localises to the cytoplasm. The catalysed reaction is Hydrolysis of proteins to small peptides in the presence of ATP and magnesium. alpha-casein is the usual test substrate. In the absence of ATP, only oligopeptides shorter than five residues are hydrolyzed (such as succinyl-Leu-Tyr-|-NHMec, and Leu-Tyr-Leu-|-Tyr-Trp, in which cleavage of the -Tyr-|-Leu- and -Tyr-|-Trp bonds also occurs).. In terms of biological role, cleaves peptides in various proteins in a process that requires ATP hydrolysis. Has a chymotrypsin-like activity. Plays a major role in the degradation of misfolded proteins. The protein is ATP-dependent Clp protease proteolytic subunit of Bordetella bronchiseptica (strain ATCC BAA-588 / NCTC 13252 / RB50) (Alcaligenes bronchisepticus).